A 2499-amino-acid polypeptide reads, in one-letter code: Probable polyketide synthase 23 (2499 aa).

A Ketosynthase family 3 (KS3) domain is found at 11-430 (DNQVAIVGLG…GSNACVLLSE (420 aa)). Residues cysteine 177, histidine 316, and histidine 354 each act as for beta-ketoacyl synthase activity in the active site. Positions 623–656 (GITPSIIVGHSLGEVASAFCSGMIDLETACFVIY) are acyl/malonyl transferases. Serine 633 acts as the For acyl/malonyl transferase activity in catalysis. The interval 924–1044 (INQLGNKNEL…SRILMKSLDV (121 aa)) is N-terminal hotdog fold. One can recognise a PKS/mFAS DH domain in the interval 924-1209 (INQLGNKNEL…IASTLSTNID (286 aa)). The Proton acceptor; for dehydratase activity role is filled by histidine 956. The segment at 1059–1209 (NWSTLKREQL…IASTLSTNID (151 aa)) is C-terminal hotdog fold. Aspartate 1121 serves as the catalytic Proton donor; for dehydratase activity. The Carrier domain occupies 2414-2491 (EKEFSIRQDI…QIINIVTTKV (78 aa)). Position 2451 is an O-(pantetheine 4'-phosphoryl)serine (serine 2451).

The cofactor is pantetheine 4'-phosphate.

Functionally, probable polyketide synthase. The protein is Probable polyketide synthase 23 (pks23) of Dictyostelium discoideum (Social amoeba).